A 636-amino-acid polypeptide reads, in one-letter code: Chaperone protein HtpG (636 aa).

The segment at 1–342 (MSSETLEFQA…AHDLSLNISR (342 aa)) is a; substrate-binding. A b region spans residues 343–558 (ELLQQDRQIQ…AHDVTPTLEK (216 aa)). Positions 559 to 636 (MYRAMGHEVP…ILAERLARTL (78 aa)) are c.

This sequence belongs to the heat shock protein 90 family. As to quaternary structure, homodimer.

The protein localises to the cytoplasm. Functionally, molecular chaperone. Has ATPase activity. The chain is Chaperone protein HtpG from Salinispora tropica (strain ATCC BAA-916 / DSM 44818 / JCM 13857 / NBRC 105044 / CNB-440).